Here is a 347-residue protein sequence, read N- to C-terminus: UPF0284 protein M1627_0030 (347 aa).

Belongs to the UPF0284 family.

This Saccharolobus islandicus (strain M.16.27) (Sulfolobus islandicus) protein is UPF0284 protein M1627_0030.